Consider the following 313-residue polypeptide: Epoxide hydrolase 1 (313 aa).

Residues 25 to 299 (PAVLFLHGFP…AAHFINQEKA (275 aa)) form the AB hydrolase-1 domain. Residue D100 is the Nucleophile of the active site. Y149 lines the an epoxide pocket. Y227 acts as the Proton donor in catalysis. The active-site Proton acceptor is the H292.

The protein belongs to the AB hydrolase superfamily. Epoxide hydrolase family. As to quaternary structure, homodimer. In terms of tissue distribution, highly expressed in fruits 15 days after anthesis (15-DAA).

The catalysed reaction is an epoxide + H2O = an ethanediol. It catalyses the reaction (24S)-24,25-epoxycucurbitadienol + H2O = (24R)-24,25-dihydroxycucurbitadienol. The protein operates within secondary metabolite biosynthesis; terpenoid biosynthesis. Epoxide hydrolase involved in the biosynthesis of cucurbitacin and mogroside tetracyclic triterpene natural products (e.g. siamenoside I and mogrosides IV, V and VI). Cucurbitacins have cytotoxic properties and exhibit deterrent taste as a defense barrier against herbivores. Mogrosides are nonsugar highly oxygenated compounds used as high-intensity zero-calorie sweeteners; they also possess pharmacological properties such as regulating immunity, lowering blood sugar and lipid levels, protecting the liver, and acting as antioxidants and antitumor agents. Catalyzes the hydrolysis of aromatic epoxide-containing substrates, such as the conversion of 24,25-epoxycucurbitadienol to 24,25-dihydroxycucurbitadienol. The protein is Epoxide hydrolase 1 of Siraitia grosvenorii (Monk's fruit).